The sequence spans 134 residues: MADSFNFELVSPERLLLSASATEVVIPATEGEMTVMANHAPTMTTVKPGVVTVKTADGKTERFAVFGGFADILPTGCTLLAESAVHVDELDRTVLENRIDEARAELEGAIDEKKTRIEQFIAELTTLGEIVIPA.

This sequence belongs to the ATPase epsilon chain family. F-type ATPases have 2 components, CF(1) - the catalytic core - and CF(0) - the membrane proton channel. CF(1) has five subunits: alpha(3), beta(3), gamma(1), delta(1), epsilon(1). CF(0) has three main subunits: a, b and c.

It is found in the cell inner membrane. In terms of biological role, produces ATP from ADP in the presence of a proton gradient across the membrane. The sequence is that of ATP synthase epsilon chain from Sinorhizobium fredii (strain NBRC 101917 / NGR234).